The sequence spans 762 residues: Endonuclease MutS2 (762 aa).

The tract at residues 1–22 is disordered; that stretch reads MSDAPKRSLNPTLMMNNNNTPP. Over residues 9-20 the composition is skewed to low complexity; it reads LNPTLMMNNNNT. Residue 333–340 participates in ATP binding; that stretch reads GVNAGGKT. The region spanning 688-762 is the Smr domain; it reads LDLRGQRSEE…GGSGVKIVKL (75 aa).

This sequence belongs to the DNA mismatch repair MutS family. MutS2 subfamily. In terms of assembly, homodimer. Binds to stalled ribosomes, contacting rRNA.

ATPase activity is stimulated by DNA. Its function is as follows. Endonuclease that is involved in the suppression of homologous recombination and may thus have a key role in the control of bacterial genetic diversity. Also involved in repairing oxidative DNA damage. Has ATPase activity. Binds DNA. Functionally, endonuclease that is involved in the suppression of homologous recombination and thus may have a key role in the control of bacterial genetic diversity. Acts as a ribosome collision sensor, splitting the ribosome into its 2 subunits. Detects stalled/collided 70S ribosomes which it binds and splits by an ATP-hydrolysis driven conformational change. Acts upstream of the ribosome quality control system (RQC), a ribosome-associated complex that mediates the extraction of incompletely synthesized nascent chains from stalled ribosomes and their subsequent degradation. Probably generates substrates for RQC. The polypeptide is Endonuclease MutS2 (Helicobacter pylori (strain ATCC 700392 / 26695) (Campylobacter pylori)).